Consider the following 332-residue polypeptide: 2,3-diketo-L-gulonate reductase (332 aa).

His-44 serves as the catalytic Proton donor. Residues Ile-168–Ser-174, Trp-224–Lys-225, and Gly-304–Glu-306 contribute to the NAD(+) site.

It belongs to the LDH2/MDH2 oxidoreductase family. DlgD subfamily. Homodimer.

Its subcellular location is the cytoplasm. It carries out the reaction 3-dehydro-L-gulonate + NAD(+) = 2,3-dioxo-L-gulonate + NADH + H(+). The catalysed reaction is 3-dehydro-L-gulonate + NADP(+) = 2,3-dioxo-L-gulonate + NADPH + H(+). Its function is as follows. Catalyzes the reduction of 2,3-diketo-L-gulonate in the presence of NADH, to form 3-keto-L-gulonate. In Escherichia coli (strain K12 / MC4100 / BW2952), this protein is 2,3-diketo-L-gulonate reductase.